The following is a 496-amino-acid chain: Probable cytosol aminopeptidase (496 aa).

The Mn(2+) site is built by Lys266 and Asp271. Lys278 is an active-site residue. The Mn(2+) site is built by Asp289, Asp348, and Glu350. Arg352 is an active-site residue.

The protein belongs to the peptidase M17 family. Mn(2+) serves as cofactor.

The protein resides in the cytoplasm. The catalysed reaction is Release of an N-terminal amino acid, Xaa-|-Yaa-, in which Xaa is preferably Leu, but may be other amino acids including Pro although not Arg or Lys, and Yaa may be Pro. Amino acid amides and methyl esters are also readily hydrolyzed, but rates on arylamides are exceedingly low.. It carries out the reaction Release of an N-terminal amino acid, preferentially leucine, but not glutamic or aspartic acids.. In terms of biological role, presumably involved in the processing and regular turnover of intracellular proteins. Catalyzes the removal of unsubstituted N-terminal amino acids from various peptides. The polypeptide is Probable cytosol aminopeptidase (Pseudomonas fluorescens (strain SBW25)).